Consider the following 101-residue polypeptide: Urease subunit beta (101 aa).

The protein belongs to the urease beta subunit family. As to quaternary structure, heterotrimer of UreA (gamma), UreB (beta) and UreC (alpha) subunits. Three heterotrimers associate to form the active enzyme.

It is found in the cytoplasm. The catalysed reaction is urea + 2 H2O + H(+) = hydrogencarbonate + 2 NH4(+). It functions in the pathway nitrogen metabolism; urea degradation; CO(2) and NH(3) from urea (urease route): step 1/1. This Ralstonia pickettii (strain 12J) protein is Urease subunit beta.